The sequence spans 314 residues: Bifunctional pinoresinol-lariciresinol reductase (314 aa).

Residues 10–16 (GGTGYIG), R35, and K44 each bind NADP(+). K138 (proton acceptor) is an active-site residue. R142 contributes to the NADP(+) binding site. H270 provides a ligand contact to substrate.

The protein belongs to the NmrA-type oxidoreductase family. Isoflavone reductase subfamily. In terms of assembly, dimer.

The catalysed reaction is (+)-lariciresinol + NADP(+) = (+)-pinoresinol + NADPH + H(+). The enzyme catalyses (+)-secoisolariciresinol + NADP(+) = (-)-lariciresinol + NADPH + H(+). Reductase involved in the lignan justicidin B biosynthesis. Catalyzes the enantioselective conversion of (+)-pinoresinol into (+)-lariciresinol and of (-)-lariciresinol into (+)-secoisolariciresinol. Low activity with the other enantiomers. Abstracts the 4R-hydride from the NADPH cofactor during catalysis. This chain is Bifunctional pinoresinol-lariciresinol reductase (PLR_Lp1), found in Linum perenne (Perennial flax).